Here is a 293-residue protein sequence, read N- to C-terminus: Ribosomal protein L11 methyltransferase (293 aa).

T145, G166, D188, and N230 together coordinate S-adenosyl-L-methionine.

Belongs to the methyltransferase superfamily. PrmA family.

It is found in the cytoplasm. The catalysed reaction is L-lysyl-[protein] + 3 S-adenosyl-L-methionine = N(6),N(6),N(6)-trimethyl-L-lysyl-[protein] + 3 S-adenosyl-L-homocysteine + 3 H(+). Its function is as follows. Methylates ribosomal protein L11. The chain is Ribosomal protein L11 methyltransferase from Edwardsiella ictaluri (strain 93-146).